Here is a 218-residue protein sequence, read N- to C-terminus: Thyroid hormone receptor alpha (218 aa).

Residues 1–215 (PEDIGQSPGV…PPLFLEVFED (215 aa)) enclose the NR LBD domain. Positions 36 and 85 each coordinate 3,3',5-triiodo-L-thyronine.

The protein belongs to the nuclear hormone receptor family. NR1 subfamily.

The protein localises to the nucleus. Functionally, nuclear hormone receptor that can act as a repressor or activator of transcription. High affinity receptor for thyroid hormones, including triiodothyronine and thyroxine. This Oncorhynchus mykiss (Rainbow trout) protein is Thyroid hormone receptor alpha (thra).